The following is a 93-amino-acid chain: Small ribosomal subunit protein uS19 (93 aa).

Belongs to the universal ribosomal protein uS19 family.

Its function is as follows. Protein S19 forms a complex with S13 that binds strongly to the 16S ribosomal RNA. The sequence is that of Small ribosomal subunit protein uS19 from Leuconostoc citreum (strain KM20).